Reading from the N-terminus, the 369-residue chain is Chaperone protein DnaJ (369 aa).

Residues 3–67 (DHYEVLGVER…QQRQQYDRGG (65 aa)) enclose the J domain. The segment at 123-205 (GAHRDLEVDT…CQGQGRVRAR (83 aa)) adopts a CR-type zinc-finger fold. Zn(2+) contacts are provided by C136, C139, C153, C156, C179, C182, C193, and C196. 4 CXXCXGXG motif repeats span residues 136-143 (CETCDGSC), 153-160 (CDICHGTG), 179-186 (CGSCRGYG), and 193-200 (CVTCQGQG).

Belongs to the DnaJ family. Homodimer. It depends on Zn(2+) as a cofactor.

It is found in the cytoplasm. In terms of biological role, participates actively in the response to hyperosmotic and heat shock by preventing the aggregation of stress-denatured proteins and by disaggregating proteins, also in an autonomous, DnaK-independent fashion. Unfolded proteins bind initially to DnaJ; upon interaction with the DnaJ-bound protein, DnaK hydrolyzes its bound ATP, resulting in the formation of a stable complex. GrpE releases ADP from DnaK; ATP binding to DnaK triggers the release of the substrate protein, thus completing the reaction cycle. Several rounds of ATP-dependent interactions between DnaJ, DnaK and GrpE are required for fully efficient folding. Also involved, together with DnaK and GrpE, in the DNA replication of plasmids through activation of initiation proteins. This Leifsonia xyli subsp. xyli (strain CTCB07) protein is Chaperone protein DnaJ.